A 128-amino-acid chain; its full sequence is Small ribosomal subunit protein eS8 (128 aa).

The protein belongs to the eukaryotic ribosomal protein eS8 family. As to quaternary structure, part of the 30S ribosomal subunit.

This Methanococcus maripaludis (strain C6 / ATCC BAA-1332) protein is Small ribosomal subunit protein eS8.